Consider the following 144-residue polypeptide: Large ribosomal subunit protein uL15 (144 aa).

Positions 1–58 (MNLSNLRAPRKANEKKKRVGRGMGSGMGKTSARGHKGQRSRSGSRMMRGFEGGQMPLH) are disordered. The segment covering 8 to 20 (APRKANEKKKRVG) has biased composition (basic residues). Residues 40 to 49 (SRSGSRMMRG) show a composition bias toward low complexity.

It belongs to the universal ribosomal protein uL15 family. As to quaternary structure, part of the 50S ribosomal subunit.

Functionally, binds to the 23S rRNA. The chain is Large ribosomal subunit protein uL15 from Koribacter versatilis (strain Ellin345).